Here is a 447-residue protein sequence, read N- to C-terminus: Adenylosuccinate synthetase (447 aa).

GTP-binding positions include 12–18 (GDEGKGK) and 40–42 (GHT). Asp-13 serves as the catalytic Proton acceptor. Mg(2+) contacts are provided by Asp-13 and Gly-40. IMP-binding positions include 13–16 (DEGK), 38–41 (NAGH), Thr-128, Arg-142, Gln-223, Thr-238, and Arg-302. The active-site Proton donor is His-41. 298 to 304 (TTTGRKR) serves as a coordination point for substrate. GTP is bound by residues Arg-304, 330–332 (KLD), and 412–414 (SLG).

The protein belongs to the adenylosuccinate synthetase family. Homodimer. Requires Mg(2+) as cofactor.

It localises to the cytoplasm. The enzyme catalyses IMP + L-aspartate + GTP = N(6)-(1,2-dicarboxyethyl)-AMP + GDP + phosphate + 2 H(+). Its pathway is purine metabolism; AMP biosynthesis via de novo pathway; AMP from IMP: step 1/2. Plays an important role in the de novo pathway of purine nucleotide biosynthesis. Catalyzes the first committed step in the biosynthesis of AMP from IMP. This chain is Adenylosuccinate synthetase, found in Nostoc punctiforme (strain ATCC 29133 / PCC 73102).